Here is a 603-residue protein sequence, read N- to C-terminus: Pentatricopeptide repeat-containing protein At2g02980, chloroplastic (603 aa).

Residues 1–38 (MAISSASLISSFSHAETFTKHSKIDTVNTQNPILLISK) constitute a chloroplast transit peptide. PPR repeat units lie at residues 93-127 (DIVI…GILP), 128-162 (DNYT…GLDD), 163-193 (NVYV…IVEP), 194-228 (CVVC…YLKP), 229-263 (NEIT…SFCK), 264-294 (YVKV…MRYK), 295-329 (DTQA…NVQP), 330-365 (DEIT…GIVP), 366-400 (SIKH…PTPM), and 432-466 (HGGD…KAVK). The tract at residues 401–476 (LWRILLAACS…VPGCSSIEVN (76 aa)) is type E motif. The segment at 477 to 507 (NVVHEFFSGDGVKSATTKLHRALDEMVKELK) is type E(+) motif. Residues 508–603 (LSGYVPDTSM…DGKCSCGDFW (96 aa)) form a type DYW motif region.

Belongs to the PPR family. PCMP-H subfamily.

Its subcellular location is the plastid. The protein localises to the chloroplast. In terms of biological role, involved in RNA editing event in chloroplasts. Required for the editing of a single site in ndhD transcript, which is a plastid-encoded subunits of the chloroplast NAD(P)H dehydrogenase (NDH) complex. Not essential for the activity of the NDH complex of the photosynthetic electron transport chain. This Arabidopsis thaliana (Mouse-ear cress) protein is Pentatricopeptide repeat-containing protein At2g02980, chloroplastic (PCMP-H26).